The chain runs to 505 residues: Flagellin (505 aa).

The protein belongs to the bacterial flagellin family.

It localises to the secreted. The protein resides in the bacterial flagellum. Flagellin is the subunit protein which polymerizes to form the filaments of bacterial flagella. The chain is Flagellin (fliC) from Salmonella montevideo.